We begin with the raw amino-acid sequence, 176 residues long: NAD(P)H-quinone oxidoreductase subunit 6, chloroplastic (176 aa).

The next 5 helical transmembrane spans lie at 10–30, 32–52, 61–81, 92–112, and 152–172; these read FLLV…VLLP, PIFS…LYIL, AQLL…VMFM, LWTI…FLLM, and FFLP…GAIS.

Belongs to the complex I subunit 6 family. NDH is composed of at least 16 different subunits, 5 of which are encoded in the nucleus.

The protein localises to the plastid. It is found in the chloroplast thylakoid membrane. It carries out the reaction a plastoquinone + NADH + (n+1) H(+)(in) = a plastoquinol + NAD(+) + n H(+)(out). It catalyses the reaction a plastoquinone + NADPH + (n+1) H(+)(in) = a plastoquinol + NADP(+) + n H(+)(out). Functionally, NDH shuttles electrons from NAD(P)H:plastoquinone, via FMN and iron-sulfur (Fe-S) centers, to quinones in the photosynthetic chain and possibly in a chloroplast respiratory chain. The immediate electron acceptor for the enzyme in this species is believed to be plastoquinone. Couples the redox reaction to proton translocation, and thus conserves the redox energy in a proton gradient. This is NAD(P)H-quinone oxidoreductase subunit 6, chloroplastic (ndhG) from Arabidopsis thaliana (Mouse-ear cress).